Consider the following 360-residue polypeptide: N6-Methyl-AMP deaminase (360 aa).

The Zn(2+) site is built by His23 and His25. N(6)-methyl-AMP-binding positions include His25, Asn27, His73, 105–108, Asp147, and Gly180; that span reads STPR. A Zn(2+)-binding site is contributed by His207. Residues Glu210, Asp292, and Asp293 each coordinate N(6)-methyl-AMP. Residue Glu210 is the Proton donor of the active site. Asp292 contacts Zn(2+).

This sequence belongs to the metallo-dependent hydrolases superfamily. Adenosine and AMP deaminases family. In terms of assembly, monomer. It depends on Zn(2+) as a cofactor.

It carries out the reaction N(6)-methyl-AMP + H2O + H(+) = IMP + methylamine. Catalyzes the hydrolysis of the free cytosolic methylated adenosine nucleotide N(6)-methyl-AMP (N6-mAMP) to produce inositol monophosphate (IMP) and methylamine. Is required for the catabolism of cytosolic N6-mAMP, which is derived from the degradation of mRNA containing N6-methylated adenine (m6A). This chain is N6-Methyl-AMP deaminase (Mapda), found in Mus musculus (Mouse).